A 439-amino-acid polypeptide reads, in one-letter code: Ribosomal protein uS12 methylthiotransferase RimO (439 aa).

The region spanning 4–114 (PKVGFVSLGC…VVRAVHGVAP (111 aa)) is the MTTase N-terminal domain. Residues Cys-13, Cys-49, Cys-78, Cys-147, Cys-151, and Cys-154 each contribute to the [4Fe-4S] cluster site. The Radical SAM core domain maps to 133-370 (LTPRHYAYLK…MEHQQAISTA (238 aa)). The TRAM domain maps to 373–439 (STRVGREIDV…EYDLWGERIA (67 aa)).

Belongs to the methylthiotransferase family. RimO subfamily. [4Fe-4S] cluster is required as a cofactor.

The protein localises to the cytoplasm. It catalyses the reaction L-aspartate(89)-[ribosomal protein uS12]-hydrogen + (sulfur carrier)-SH + AH2 + 2 S-adenosyl-L-methionine = 3-methylsulfanyl-L-aspartate(89)-[ribosomal protein uS12]-hydrogen + (sulfur carrier)-H + 5'-deoxyadenosine + L-methionine + A + S-adenosyl-L-homocysteine + 2 H(+). In terms of biological role, catalyzes the methylthiolation of an aspartic acid residue of ribosomal protein uS12. In Bordetella parapertussis (strain 12822 / ATCC BAA-587 / NCTC 13253), this protein is Ribosomal protein uS12 methylthiotransferase RimO.